The primary structure comprises 366 residues: Peptide chain release factor 1 (366 aa).

Position 239 is an N5-methylglutamine (glutamine 239).

This sequence belongs to the prokaryotic/mitochondrial release factor family. In terms of processing, methylated by PrmC. Methylation increases the termination efficiency of RF1.

The protein localises to the cytoplasm. Functionally, peptide chain release factor 1 directs the termination of translation in response to the peptide chain termination codons UAG and UAA. This chain is Peptide chain release factor 1, found in Baumannia cicadellinicola subsp. Homalodisca coagulata.